A 60-amino-acid chain; its full sequence is Large ribosomal subunit protein uL30 (60 aa).

This sequence belongs to the universal ribosomal protein uL30 family. Part of the 50S ribosomal subunit.

The polypeptide is Large ribosomal subunit protein uL30 (Cupriavidus necator (strain ATCC 17699 / DSM 428 / KCTC 22496 / NCIMB 10442 / H16 / Stanier 337) (Ralstonia eutropha)).